A 132-amino-acid chain; its full sequence is Profilin (132 aa).

It belongs to the profilin family. In terms of assembly, occurs in many kinds of cells as a complex with monomeric actin in a 1:1 ratio.

It is found in the cytoplasm. The protein localises to the cytoskeleton. Its function is as follows. Binds to actin and affects the structure of the cytoskeleton. At high concentrations, profilin prevents the polymerization of actin, whereas it enhances it at low concentrations. By binding to PIP2, it inhibits the formation of IP3 and DG. The sequence is that of Profilin from Naegleria pringsheimi (Amoeba).